The primary structure comprises 466 residues: tRNA dimethylallyltransferase 2 (466 aa).

27 to 34 (GPTGSGKS) is an ATP binding site. 29–34 (TGSGKS) is a substrate binding site. The interval 52-55 (DAMQ) is interaction with substrate tRNA. The disordered stretch occupies residues 433-466 (WEHHKQGRTHRKRTTRHKNSQTYKNREVQEAEVN). Positions 437–451 (KQGRTHRKRTTRHKN) are enriched in basic residues. Residues 456 to 466 (KNREVQEAEVN) show a composition bias toward basic and acidic residues.

The protein belongs to the IPP transferase family. The cofactor is Mg(2+). In terms of tissue distribution, expressed ubiquitously, with highest expression in proliferating tissues.

Its subcellular location is the cytoplasm. It catalyses the reaction adenosine(37) in tRNA + dimethylallyl diphosphate = N(6)-dimethylallyladenosine(37) in tRNA + diphosphate. In terms of biological role, catalyzes the transfer of a dimethylallyl group onto the adenine at position 37 in tRNAs that read codons beginning with uridine, leading to the formation of N6-(dimethylallyl)adenosine (i(6)A). Involved in the cis-type cytokinin biosynthesis. This Arabidopsis thaliana (Mouse-ear cress) protein is tRNA dimethylallyltransferase 2 (IPT2).